A 27-amino-acid polypeptide reads, in one-letter code: Pregnancy-associated glycoprotein 55 (27 aa).

The protein belongs to the peptidase A1 family. Glycosylated. In terms of tissue distribution, placenta.

This chain is Pregnancy-associated glycoprotein 55 (PAG55), found in Capra hircus (Goat).